Reading from the N-terminus, the 296-residue chain is Porphobilinogen deaminase (296 aa).

Residue Cys232 is modified to S-(dipyrrolylmethanemethyl)cysteine.

Belongs to the HMBS family. Monomer. The cofactor is dipyrromethane.

It carries out the reaction 4 porphobilinogen + H2O = hydroxymethylbilane + 4 NH4(+). It participates in porphyrin-containing compound metabolism; protoporphyrin-IX biosynthesis; coproporphyrinogen-III from 5-aminolevulinate: step 2/4. Functionally, tetrapolymerization of the monopyrrole PBG into the hydroxymethylbilane pre-uroporphyrinogen in several discrete steps. In Corynebacterium aurimucosum (strain ATCC 700975 / DSM 44827 / CIP 107346 / CN-1) (Corynebacterium nigricans), this protein is Porphobilinogen deaminase.